A 198-amino-acid polypeptide reads, in one-letter code: Holliday junction resolvase RecU (198 aa).

The interval 1–29 (MIRYPNGKSYQPKTAASSLQKKPSYSNRG) is disordered. The segment covering 8–29 (KSYQPKTAASSLQKKPSYSNRG) has biased composition (polar residues). Residues threonine 83, aspartate 85, glutamate 98, and glutamine 117 each contribute to the Mg(2+) site.

The protein belongs to the RecU family. Mg(2+) serves as cofactor.

The protein localises to the cytoplasm. It carries out the reaction Endonucleolytic cleavage at a junction such as a reciprocal single-stranded crossover between two homologous DNA duplexes (Holliday junction).. Functionally, endonuclease that resolves Holliday junction intermediates in genetic recombination. Cleaves mobile four-strand junctions by introducing symmetrical nicks in paired strands. Promotes annealing of linear ssDNA with homologous dsDNA. Required for DNA repair, homologous recombination and chromosome segregation. In Bacillus licheniformis (strain ATCC 14580 / DSM 13 / JCM 2505 / CCUG 7422 / NBRC 12200 / NCIMB 9375 / NCTC 10341 / NRRL NRS-1264 / Gibson 46), this protein is Holliday junction resolvase RecU.